Consider the following 467-residue polypeptide: uncharacterized protein (467 aa).

Sel1-like repeat units lie at residues Pro38–His73, Pro107–Asn138, Pro139–Leu172, Pro173–Tyr208, Pro240–His275, Pro276–Ser311, Ala343–His378, Ser379–Asp414, and Ser415–Tyr450.

This is an uncharacterized protein from Neisseria meningitidis serogroup B (strain ATCC BAA-335 / MC58).